A 164-amino-acid polypeptide reads, in one-letter code: Nucleotide-binding protein Helmi_22490 (164 aa).

This sequence belongs to the YajQ family.

Nucleotide-binding protein. The chain is Nucleotide-binding protein Helmi_22490 from Heliobacterium modesticaldum (strain ATCC 51547 / Ice1).